A 148-amino-acid polypeptide reads, in one-letter code: Large ribosomal subunit protein bL9 (148 aa).

It belongs to the bacterial ribosomal protein bL9 family.

Binds to the 23S rRNA. This chain is Large ribosomal subunit protein bL9, found in Leptospira biflexa serovar Patoc (strain Patoc 1 / Ames).